The chain runs to 485 residues: Myocardial zonula adherens protein (485 aa).

Positions 1-18 (MMRYGSAATVTTSETASS) are enriched in low complexity. Disordered regions lie at residues 1-21 (MMRY…SQKP) and 40-65 (KQEE…KKRN).

This sequence belongs to the MYZAP family.

The chain is Myocardial zonula adherens protein (myzap) from Xenopus tropicalis (Western clawed frog).